Reading from the N-terminus, the 178-residue chain is SPNGLLQFPFPRGASWHVGGAHTNTGSGNYPMSSLDMSRGGGSNQNGNWVSASAAGGSFKRHSSCFAEIVHTGGWSTTYYHLMNIQYNTGANVSMNTAIANAPNTQAQALCNGGQSTGPHQHWSLKQNGSFYHLNGTYLSGYRITATGSSYDTNCSRFYLTKNGQNYCYGYYVNPGPN.

The cysteines at positions 65 and 111 are disulfide-linked. Residues His120 and His122 each coordinate Zn(2+). Cysteines 155 and 168 form a disulfide.

The protein belongs to the peptidase M23A family. It depends on Zn(2+) as a cofactor.

The enzyme catalyses Cleavage of N-acetylmuramoyl-|-Ala, and of the insulin B chain at 23-Gly-|-Phe-24 &gt; 18-Val-|-Cys(SO3H).. This chain is Beta-lytic metalloendopeptidase, found in Lysobacter enzymogenes.